A 343-amino-acid chain; its full sequence is UDP-3-O-acylglucosamine N-acyltransferase (343 aa).

Catalysis depends on H237, which acts as the Proton acceptor.

This sequence belongs to the transferase hexapeptide repeat family. LpxD subfamily. Homotrimer.

The enzyme catalyses a UDP-3-O-[(3R)-3-hydroxyacyl]-alpha-D-glucosamine + a (3R)-hydroxyacyl-[ACP] = a UDP-2-N,3-O-bis[(3R)-3-hydroxyacyl]-alpha-D-glucosamine + holo-[ACP] + H(+). It participates in bacterial outer membrane biogenesis; LPS lipid A biosynthesis. Functionally, catalyzes the N-acylation of UDP-3-O-acylglucosamine using 3-hydroxyacyl-ACP as the acyl donor. Is involved in the biosynthesis of lipid A, a phosphorylated glycolipid that anchors the lipopolysaccharide to the outer membrane of the cell. The chain is UDP-3-O-acylglucosamine N-acyltransferase from Synechococcus sp. (strain JA-3-3Ab) (Cyanobacteria bacterium Yellowstone A-Prime).